A 601-amino-acid chain; its full sequence is Glutathione-regulated potassium-efflux system protein KefB (601 aa).

13 helical membrane-spanning segments follow: residues 4–24 (SDFL…VPLA), 29–49 (IGAV…GLGF), 55–75 (EILH…GLEL), 87–107 (IFGV…GLLM), 115–135 (AAVV…LQLM), 152–172 (VLLF…LLAG), 177–197 (HFDW…LIGG), 207–227 (FIAA…LVLG), 230–250 (LFMD…GVLL), 262–282 (AIDP…GMSL), 284–304 (LGVL…LVAV), 324–344 (MQFA…FSTA), and 356–376 (ALLL…MKLV). The 120-residue stretch at 400-519 (KPQVIVVGFG…AGVTQFSRET (120 aa)) folds into the RCK N-terminal domain.

The protein belongs to the monovalent cation:proton antiporter 2 (CPA2) transporter (TC 2.A.37) family. KefB subfamily. In terms of assembly, interacts with the regulatory subunit KefG.

It is found in the cell inner membrane. Pore-forming subunit of a potassium efflux system that confers protection against electrophiles. Catalyzes K(+)/H(+) antiport. In Shigella boydii serotype 18 (strain CDC 3083-94 / BS512), this protein is Glutathione-regulated potassium-efflux system protein KefB.